A 620-amino-acid chain; its full sequence is 1-deoxy-D-xylulose-5-phosphate synthase (620 aa).

Residues His80 and 121–123 each bind thiamine diphosphate; that span reads GHS. Position 152 (Asp152) interacts with Mg(2+). Residues 153 to 154, Asn181, Tyr288, and Glu370 each bind thiamine diphosphate; that span reads GA. Asn181 serves as a coordination point for Mg(2+).

Belongs to the transketolase family. DXPS subfamily. Homodimer. The cofactor is Mg(2+). Requires thiamine diphosphate as cofactor.

The enzyme catalyses D-glyceraldehyde 3-phosphate + pyruvate + H(+) = 1-deoxy-D-xylulose 5-phosphate + CO2. The protein operates within metabolic intermediate biosynthesis; 1-deoxy-D-xylulose 5-phosphate biosynthesis; 1-deoxy-D-xylulose 5-phosphate from D-glyceraldehyde 3-phosphate and pyruvate: step 1/1. Its function is as follows. Catalyzes the acyloin condensation reaction between C atoms 2 and 3 of pyruvate and glyceraldehyde 3-phosphate to yield 1-deoxy-D-xylulose-5-phosphate (DXP). The sequence is that of 1-deoxy-D-xylulose-5-phosphate synthase from Escherichia coli O6:K15:H31 (strain 536 / UPEC).